Here is a 572-residue protein sequence, read N- to C-terminus: Triacylglycerol lipase OBL1 (572 aa).

The helical transmembrane segment at 110–130 threads the bilayer; the sequence is GYLVEFFLNLFSLNGNFLGLL. The disordered stretch occupies residues 320–356; the sequence is IPPSESSKSSTSFSDSDAHTGSDLSSDSERPTDTRKK. Residues 323-334 show a composition bias toward low complexity; that stretch reads SESSKSSTSFSD. Residues 346 to 356 show a composition bias toward basic and acidic residues; sequence DSERPTDTRKK. The short motif at 391–395 is the GXSXG element; the sequence is GHSLG. The active-site Nucleophile is the Ser393. Active-site charge relay system residues include Asp457 and His550.

It belongs to the AB hydrolase superfamily. Lipase family. In terms of tissue distribution, expressed in pollen grains and pollen tubes.

It is found in the lipid droplet. Its subcellular location is the membrane. It catalyses the reaction 1,2-di-(9Z-octadecenoyl)-glycerol + (9Z)-octadecenoate + H(+) = 1,2,3-tri-(9Z-octadecenoyl)-glycerol + H2O. The enzyme catalyses 1-(9Z-octadecenoyl)-glycerol + H2O = glycerol + (9Z)-octadecenoate + H(+). In terms of biological role, acid lipase that can hydrolyze a range of triacylglycerols without a clear preference for acyl-chains. Can also cleave 1,2-diacylglycerol, 1,3-diacylglycerol and 1-monoacylglycerol, but not phosphatidylcholine, phosphatidylethanolamine, or sterol esters. Required for pollen tube growth. Triacylglycerol hydrolysis by OBL1 may provide acyl groups for the synthesis of membrane lipids in growing pollen tubes. The sequence is that of Triacylglycerol lipase OBL1 from Nicotiana tabacum (Common tobacco).